The following is a 78-amino-acid chain: Defensin-like protein 201 (78 aa).

The signal sequence occupies residues 1–22; that stretch reads MRNLINFAVLIMTIFIVSASGA. Cystine bridges form between Cys32–Cys78, Cys41–Cys61, Cys46–Cys71, and Cys50–Cys73.

The protein belongs to the DEFL family.

It is found in the secreted. The protein is Defensin-like protein 201 of Arabidopsis thaliana (Mouse-ear cress).